The chain runs to 209 residues: tRNA(Phe) 7-((3-amino-3-carboxypropyl)-4-demethylwyosine(37)-N(4))-methyltransferase (209 aa).

It belongs to the TYW3 family.

The catalysed reaction is 4-demethyl-7-[(3S)-3-amino-3-carboxypropyl]wyosine(37) in tRNA(Phe) + S-adenosyl-L-methionine = 7-[(3S)-3-amino-3-carboxypropyl]wyosine(37) in tRNA(Phe) + S-adenosyl-L-homocysteine + H(+). S-adenosyl-L-methionine-dependent methyltransferase that acts as a component of the wyosine derivatives biosynthesis pathway. Probably methylates N-4 position of wybutosine-86 to produce wybutosine-72. This is tRNA(Phe) 7-((3-amino-3-carboxypropyl)-4-demethylwyosine(37)-N(4))-methyltransferase from Saccharolobus solfataricus (strain ATCC 35092 / DSM 1617 / JCM 11322 / P2) (Sulfolobus solfataricus).